Here is a 55-residue protein sequence, read N- to C-terminus: U17-myrmicitoxin-Mri1b (55 aa).

Positions 1–31 (MENSRTSTFTAYVTVAFLLISTFVTMVVTES) are cleaved as a signal peptide. Gln-32 carries the post-translational modification Pyrrolidone carboxylic acid.

Post-translationally, contains 1 disulfide bond. Expressed by the venom gland.

It localises to the secreted. The polypeptide is U17-myrmicitoxin-Mri1b (Manica rubida (European giant red ant)).